We begin with the raw amino-acid sequence, 116 residues long: Ribosome-binding factor A (116 aa).

The protein belongs to the RbfA family. In terms of assembly, monomer. Binds 30S ribosomal subunits, but not 50S ribosomal subunits or 70S ribosomes.

It is found in the cytoplasm. One of several proteins that assist in the late maturation steps of the functional core of the 30S ribosomal subunit. Associates with free 30S ribosomal subunits (but not with 30S subunits that are part of 70S ribosomes or polysomes). Required for efficient processing of 16S rRNA. May interact with the 5'-terminal helix region of 16S rRNA. This chain is Ribosome-binding factor A, found in Streptococcus uberis (strain ATCC BAA-854 / 0140J).